The following is a 91-amino-acid chain: Probable Fe(2+)-trafficking protein (91 aa).

Belongs to the Fe(2+)-trafficking protein family.

Functionally, could be a mediator in iron transactions between iron acquisition and iron-requiring processes, such as synthesis and/or repair of Fe-S clusters in biosynthetic enzymes. The polypeptide is Probable Fe(2+)-trafficking protein (Histophilus somni (strain 129Pt) (Haemophilus somnus)).